The sequence spans 363 residues: Protein-arginine kinase (363 aa).

The Phosphagen kinase C-terminal domain maps to 24 to 254 (IVLSSRIRLA…AQLIEQERSA (231 aa)). Residues 27 to 31 (SSRIR), His92, Arg125, 176 to 180 (RASVM), and 207 to 212 (RGIYGE) each bind ATP. The short motif at 337-342 (RDIRRA) is the RDXXRA motif of the pArg binding pocket involved in allosteric regulation element.

The protein belongs to the ATP:guanido phosphotransferase family.

The enzyme catalyses L-arginyl-[protein] + ATP = N(omega)-phospho-L-arginyl-[protein] + ADP + H(+). Its activity is regulated as follows. Appears to be allosterically activated by the binding of pArg-containing polypeptides to the pArg-binding pocket localized in the C-terminal domain of McsB. Functionally, catalyzes the specific phosphorylation of arginine residues in a large number of proteins. Is part of the bacterial stress response system. Protein arginine phosphorylation has a physiologically important role and is involved in the regulation of many critical cellular processes, such as protein homeostasis, motility, competence, and stringent and stress responses, by regulating gene expression and protein activity. The chain is Protein-arginine kinase from Bacillus licheniformis (strain ATCC 14580 / DSM 13 / JCM 2505 / CCUG 7422 / NBRC 12200 / NCIMB 9375 / NCTC 10341 / NRRL NRS-1264 / Gibson 46).